A 77-amino-acid polypeptide reads, in one-letter code: U8-lycotoxin-Ls1o (77 aa).

Positions 1-20 (MKLMIFTGLVLFAIVSLIEA) are cleaved as a signal peptide. The propeptide occupies 21-26 (QAENGK).

Belongs to the neurotoxin 19 (CSTX) family. 08 (U8-Lctx) subfamily. Post-translationally, contains 4 disulfide bonds. Expressed by the venom gland.

Its subcellular location is the secreted. The sequence is that of U8-lycotoxin-Ls1o from Lycosa singoriensis (Wolf spider).